The chain runs to 469 residues: 3-isopropylmalate dehydratase large subunit (469 aa).

[4Fe-4S] cluster-binding residues include cysteine 350, cysteine 410, and cysteine 413.

The protein belongs to the aconitase/IPM isomerase family. LeuC type 1 subfamily. In terms of assembly, heterodimer of LeuC and LeuD. [4Fe-4S] cluster serves as cofactor.

The catalysed reaction is (2R,3S)-3-isopropylmalate = (2S)-2-isopropylmalate. It functions in the pathway amino-acid biosynthesis; L-leucine biosynthesis; L-leucine from 3-methyl-2-oxobutanoate: step 2/4. Catalyzes the isomerization between 2-isopropylmalate and 3-isopropylmalate, via the formation of 2-isopropylmaleate. This chain is 3-isopropylmalate dehydratase large subunit, found in Sinorhizobium medicae (strain WSM419) (Ensifer medicae).